The sequence spans 575 residues: Proline--tRNA ligase 1 (575 aa).

The protein belongs to the class-II aminoacyl-tRNA synthetase family. ProS type 1 subfamily. In terms of assembly, homodimer.

Its subcellular location is the cytoplasm. The catalysed reaction is tRNA(Pro) + L-proline + ATP = L-prolyl-tRNA(Pro) + AMP + diphosphate. Its function is as follows. Catalyzes the attachment of proline to tRNA(Pro) in a two-step reaction: proline is first activated by ATP to form Pro-AMP and then transferred to the acceptor end of tRNA(Pro). As ProRS can inadvertently accommodate and process non-cognate amino acids such as alanine and cysteine, to avoid such errors it has two additional distinct editing activities against alanine. One activity is designated as 'pretransfer' editing and involves the tRNA(Pro)-independent hydrolysis of activated Ala-AMP. The other activity is designated 'posttransfer' editing and involves deacylation of mischarged Ala-tRNA(Pro). The misacylated Cys-tRNA(Pro) is not edited by ProRS. This Anaeromyxobacter dehalogenans (strain 2CP-C) protein is Proline--tRNA ligase 1.